The following is a 135-amino-acid chain: Small ribosomal subunit protein uS9 (135 aa).

A compositionally biased stretch (basic and acidic residues) spans 102-115; that stretch reads PLKTEGHLSRDPRA. Residues 102–135 are disordered; sequence PLKTEGHLSRDPRAKERRKYGLKKARKAPQFSKR. A compositionally biased stretch (basic residues) spans 116–135; sequence KERRKYGLKKARKAPQFSKR.

It belongs to the universal ribosomal protein uS9 family.

This is Small ribosomal subunit protein uS9 from Synechococcus sp. (strain CC9311).